The sequence spans 238 residues: Probable transcriptional regulatory protein CHU_3516 (238 aa).

It belongs to the TACO1 family.

It is found in the cytoplasm. This Cytophaga hutchinsonii (strain ATCC 33406 / DSM 1761 / CIP 103989 / NBRC 15051 / NCIMB 9469 / D465) protein is Probable transcriptional regulatory protein CHU_3516.